The chain runs to 506 residues: MPNEIFTINLNAQAIIPEAFILLGIVGTLLVDLAGEKTASKWAPSICYLSIGSSLLSLTLQWNNPVESAFLGSFNSDNLAIAFRAIIALSTLVSLLISWRYTEQSGSPIGEFAAIVLSATLGAMLLCGSTDLISVFISLETLSVASYLLSGYLKRDPRSSEAALKYLLVGSAAAAVYLYGSSFLYGLSGSTNLTTIGLEIINKPSFITSLALVFVLSTVAFKIAAVPFHQWTPDVYEGSPTPVVAFLSVGSKTAGFAFAIRILSTTFSSFDEEWKLLFTILAILSMALGNVVALAQTSMKRMLAYSSIGQAGFVMIGIVSGTQDGLSAAVLYLAAYLFMNLGAFSCVILFSLRTGSDRILDYSGLYQKDPLITLGLSLCLLSLGGLPPMLGFFGKIYLFFAGWANHQYLLVIVGLVTSVISIYYYISVIKMMVVKEPQEASEIVKSYPEVNWGIAGLPPLRVALYTCVAVTALGGILSNPLFKLANTAVSETPFLQDVIAAANNIS.

A run of 13 helical transmembrane segments spans residues 14–34 (AIIPEAFILLGIVGTLLVDLA), 42–62 (WAPSICYLSIGSSLLSLTLQW), 79–99 (LAIAFRAIIALSTLVSLLISW), 108–128 (PIGEFAAIVLSATLGAMLLCG), 132–152 (LISVFISLETLSVASYLLSGY), 167–187 (LLVGSAAAAVYLYGSSFLYGL), 206–226 (FITSLALVFVLSTVAFKIAAV), 240–260 (PTPVVAFLSVGSKTAGFAFAI), 276–296 (LLFTILAILSMALGNVVALAQ), 302–322 (MLAYSSIGQAGFVMIGIVSGT), 330–350 (VLYLAAYLFMNLGAFSCVILF), 374–394 (LGLSLCLLSLGGLPPMLGFFG), and 409–429 (LLVIVGLVTSVISIYYYISVI).

It belongs to the complex I subunit 2 family. In terms of assembly, NDH-1 can be composed of about 15 different subunits; different subcomplexes with different compositions have been identified which probably have different functions.

The protein resides in the cellular thylakoid membrane. It carries out the reaction a plastoquinone + NADH + (n+1) H(+)(in) = a plastoquinol + NAD(+) + n H(+)(out). The enzyme catalyses a plastoquinone + NADPH + (n+1) H(+)(in) = a plastoquinol + NADP(+) + n H(+)(out). NDH-1 shuttles electrons from an unknown electron donor, via FMN and iron-sulfur (Fe-S) centers, to quinones in the respiratory and/or the photosynthetic chain. The immediate electron acceptor for the enzyme in this species is believed to be plastoquinone. Couples the redox reaction to proton translocation, and thus conserves the redox energy in a proton gradient. Cyanobacterial NDH-1 also plays a role in inorganic carbon-concentration. The protein is NAD(P)H-quinone oxidoreductase subunit 2 of Prochlorococcus marinus (strain MIT 9301).